The sequence spans 547 residues: Chaperonin GroEL (547 aa).

ATP is bound by residues 30–33 (TLGP), K51, 87–91 (DGTTT), G415, 479–481 (NAA), and D495.

This sequence belongs to the chaperonin (HSP60) family. In terms of assembly, forms a cylinder of 14 subunits composed of two heptameric rings stacked back-to-back. Interacts with the co-chaperonin GroES.

The protein localises to the cytoplasm. The enzyme catalyses ATP + H2O + a folded polypeptide = ADP + phosphate + an unfolded polypeptide.. Functionally, together with its co-chaperonin GroES, plays an essential role in assisting protein folding. The GroEL-GroES system forms a nano-cage that allows encapsulation of the non-native substrate proteins and provides a physical environment optimized to promote and accelerate protein folding. This chain is Chaperonin GroEL, found in Acinetobacter baumannii (strain ACICU).